The following is a 439-amino-acid chain: Methionine aminopeptidase 2-2 (439 aa).

The segment at 1-90 is disordered; sequence MAAQTTEKLD…RVPVSNLFPN (90 aa). Residues 28–41 show a composition bias toward acidic residues; sequence EAEEDSDDAQDEGA. The segment covering 56-72 has biased composition (basic residues); that stretch reads KKKKKKKPKKKSKKKGG. A substrate-binding site is contributed by histidine 196. A divalent metal cation contacts are provided by aspartate 216, aspartate 227, and histidine 296. Histidine 304 provides a ligand contact to substrate. Glutamate 329 and glutamate 424 together coordinate a divalent metal cation.

Belongs to the peptidase M24A family. Methionine aminopeptidase eukaryotic type 2 subfamily. It depends on Co(2+) as a cofactor. Requires Zn(2+) as cofactor. Mn(2+) serves as cofactor. The cofactor is Fe(2+).

It is found in the cytoplasm. It catalyses the reaction Release of N-terminal amino acids, preferentially methionine, from peptides and arylamides.. In terms of biological role, cotranslationally removes the N-terminal methionine from nascent proteins. The N-terminal methionine is often cleaved when the second residue in the primary sequence is small and uncharged (Met-Ala-, Cys, Gly, Pro, Ser, Thr, or Val). The sequence is that of Methionine aminopeptidase 2-2 from Penicillium rubens (strain ATCC 28089 / DSM 1075 / NRRL 1951 / Wisconsin 54-1255) (Penicillium chrysogenum).